We begin with the raw amino-acid sequence, 678 residues long: Inositol-trisphosphate 3-kinase C (678 aa).

Disordered regions lie at residues 26 to 128 (LEAL…RRNS) and 151 to 300 (DLQS…LDLS). Residues 44-58 (PGAGGPTGRPEGGGP) show a composition bias toward gly residues. Composition is skewed to basic and acidic residues over residues 61 to 76 (WIEE…RTDL) and 107 to 116 (EKPRQNKELD). Position 160 is a phosphoserine (serine 160). Basic and acidic residues-rich tracts occupy residues 173–196 (ELDR…DNLR) and 220–236 (SGKE…HDTD). Positions 318–326 (LCPVPRLII) match the Nuclear export signal motif. The tract at residues 328–380 (PETPEPEAQPVGPQSRIEGGTGGFSSASSFDESEDDLVAGGGGTSDPEDRAGS) is disordered. A Phosphothreonine modification is found at threonine 330. Serine 398 carries the post-translational modification Phosphoserine. ATP contacts are provided by residues lysine 426, 466-468 (EDL), and aspartate 479. Substrate contacts are provided by residues lysine 481, 502 to 508 (RKDMYEK), and 529 to 536 (KPRYMQWR). The segment at 504–512 (DMYEKMVAV) is calmodulin-binding. Positions 553 and 633 each coordinate ATP. Lysine 636 contacts substrate.

The protein belongs to the inositol phosphokinase (IPK) family.

The protein localises to the nucleus. It localises to the cytoplasm. The enzyme catalyses 1D-myo-inositol 1,4,5-trisphosphate + ATP = 1D-myo-inositol 1,3,4,5-tetrakisphosphate + ADP + H(+). With respect to regulation, activated by calcium/calmodulin. Inhibited by high concentrations of the substrate Ins(1,2,4)P3, and allosterically activated by the product Ins(1,3,4,5)P4. Catalyzes the phosphorylation of 1D-myo-inositol 1,4,5-trisphosphate (InsP3) into 1D-myo-inositol 1,3,4,5-tetrakisphosphate and participates to the regulation of calcium homeostasis. Can phosphorylate inositol 2,4,5-triphosphate to inositol 2,4,5,6-tetraphosphate. In Mus musculus (Mouse), this protein is Inositol-trisphosphate 3-kinase C (Itpkc).